The primary structure comprises 334 residues: Formamidase (334 aa).

Residues 14–260 (FLVAAIQFPV…WEIVTGEIYP (247 aa)) form the CN hydrolase domain. The active-site Proton acceptor is the glutamate 60. The Proton donor role is filled by lysine 133. Cysteine 166 acts as the Nucleophile in catalysis.

This sequence belongs to the carbon-nitrogen hydrolase superfamily. Aliphatic amidase family.

The enzyme catalyses formamide + H2O = formate + NH4(+). Is an aliphatic amidase with a restricted substrate specificity, as it only hydrolyzes formamide. This is Formamidase from Helicobacter pylori (strain P12).